A 66-amino-acid chain; its full sequence is Dermaseptin PD-3-7 (66 aa).

An N-terminal signal peptide occupies residues 1-22 (MSFMKKSLLLVLFLGVVSLSNC). A propeptide spanning residues 23-40 (EEEKGENENEDHEEHHEE) is cleaved from the precursor.

As to expression, expressed by the skin glands.

It localises to the secreted. Functionally, possesses a potent antimicrobial activity against Gram-positive and Gram-negative bacteria. Probably acts by disturbing membrane functions with its amphipathic structure. The protein is Dermaseptin PD-3-7 of Agalychnis dacnicolor (Giant Mexican leaf frog).